Consider the following 504-residue polypeptide: L-carnitine/gamma-butyrobetaine antiporter (504 aa).

Transmembrane regions (helical) follow at residues 10–30, 51–71, 92–112, 143–163, 195–215, 231–251, 263–283, 316–336, 347–367, 398–418, 446–466, and 475–495; these read IEPK…WLTV, WGWA…WLVF, IFMM…SIEI, GPLP…FFFV, FYLV…TPLV, LDAI…ACGL, SYLS…SFIM, WTVF…IFLA, LCFG…TVLG, WAAL…CFIA, LLVR…LLAL, and AIIA…LSFI.

Belongs to the BCCT transporter (TC 2.A.15) family. CaiT subfamily. Homotrimer.

Its subcellular location is the cell inner membrane. It catalyses the reaction 4-(trimethylamino)butanoate(in) + (R)-carnitine(out) = 4-(trimethylamino)butanoate(out) + (R)-carnitine(in). The protein operates within amine and polyamine metabolism; carnitine metabolism. In terms of biological role, catalyzes the exchange of L-carnitine for gamma-butyrobetaine. The sequence is that of L-carnitine/gamma-butyrobetaine antiporter from Shigella flexneri serotype 5b (strain 8401).